Reading from the N-terminus, the 276-residue chain is Protein-glutamine gamma-glutamyltransferase (276 aa).

This sequence belongs to the bacillus TGase family.

It catalyses the reaction L-glutaminyl-[protein] + L-lysyl-[protein] = [protein]-L-lysyl-N(6)-5-L-glutamyl-[protein] + NH4(+). In terms of biological role, probably plays a role in the assembly of the spore coat proteins by catalyzing epsilon-(gamma-glutamyl)lysine cross-links. The polypeptide is Protein-glutamine gamma-glutamyltransferase (Bacillus cereus (strain 03BB102)).